We begin with the raw amino-acid sequence, 1360 residues long: S-layer protein A (1360 aa).

An N-terminal signal peptide occupies residues 1-24; sequence MNKSAIRYLSLLLVFLMGGSFLAG.

Belongs to the Sulfolobales SlaA family. As to quaternary structure, the mushroom-shaped unit cells of the Sulfolobales' S-layers may consist of three SlaB subunits and six SlaA subunits.

The protein resides in the secreted. It localises to the cell wall. The protein localises to the S-layer. Its function is as follows. S-layer large protein. May form the highly ordered outer sheath. The polypeptide is S-layer protein A (Metallosphaera sedula (strain ATCC 51363 / DSM 5348 / JCM 9185 / NBRC 15509 / TH2)).